The following is a 172-amino-acid chain: Shikimate kinase (172 aa).

14–19 serves as a coordination point for ATP; it reads GAGKST. A Mg(2+)-binding site is contributed by S18. 3 residues coordinate substrate: D36, R60, and G82. R120 is a binding site for ATP. R139 contacts substrate. Q156 provides a ligand contact to ATP.

This sequence belongs to the shikimate kinase family. Monomer. The cofactor is Mg(2+).

It is found in the cytoplasm. The enzyme catalyses shikimate + ATP = 3-phosphoshikimate + ADP + H(+). Its pathway is metabolic intermediate biosynthesis; chorismate biosynthesis; chorismate from D-erythrose 4-phosphate and phosphoenolpyruvate: step 5/7. Functionally, catalyzes the specific phosphorylation of the 3-hydroxyl group of shikimic acid using ATP as a cosubstrate. In Vibrio campbellii (strain ATCC BAA-1116), this protein is Shikimate kinase.